Reading from the N-terminus, the 300-residue chain is Ribosomal protein L11 methyltransferase (300 aa).

4 residues coordinate S-adenosyl-L-methionine: T152, G173, D195, and N234.

This sequence belongs to the methyltransferase superfamily. PrmA family.

Its subcellular location is the cytoplasm. It carries out the reaction L-lysyl-[protein] + 3 S-adenosyl-L-methionine = N(6),N(6),N(6)-trimethyl-L-lysyl-[protein] + 3 S-adenosyl-L-homocysteine + 3 H(+). In terms of biological role, methylates ribosomal protein L11. The protein is Ribosomal protein L11 methyltransferase of Burkholderia multivorans (strain ATCC 17616 / 249).